A 96-amino-acid chain; its full sequence is ATP synthase subunit e, mitochondrial (96 aa).

An N-acetylserine modification is found at Ser-2.

The protein belongs to the ATPase e subunit family. F-type ATPases have 2 components, CF(1) - the catalytic core - and CF(0) - the membrane proton channel. In yeast, the dimeric form of ATP synthase consists of 17 polypeptides: alpha, beta, gamma, delta, epsilon, 4 (B), 5 (OSCP), 6 (A), 8, 9 (C), d, E (Tim11), f, g, h, i/j and k.

It localises to the mitochondrion. The protein resides in the mitochondrion inner membrane. Functionally, mitochondrial membrane ATP synthase (F(1)F(0) ATP synthase or Complex V) produces ATP from ADP in the presence of a proton gradient across the membrane which is generated by electron transport complexes of the respiratory chain. F-type ATPases consist of two structural domains, F(1) - containing the extramembraneous catalytic core, and F(0) - containing the membrane proton channel, linked together by a central stalk and a peripheral stalk. During catalysis, ATP synthesis in the catalytic domain of F(1) is coupled via a rotary mechanism of the central stalk subunits to proton translocation. Part of the complex F(0) domain. Minor subunit located with subunit a in the membrane. In Saccharomyces cerevisiae (strain ATCC 204508 / S288c) (Baker's yeast), this protein is ATP synthase subunit e, mitochondrial (TIM11).